The primary structure comprises 379 residues: Glucose-1-phosphate adenylyltransferase (379 aa).

Alpha-D-glucose 1-phosphate-binding positions include glycine 164, 179-180 (EK), and serine 190.

This sequence belongs to the bacterial/plant glucose-1-phosphate adenylyltransferase family. Homotetramer.

It catalyses the reaction alpha-D-glucose 1-phosphate + ATP + H(+) = ADP-alpha-D-glucose + diphosphate. It functions in the pathway glycan biosynthesis; glycogen biosynthesis. Its function is as follows. Involved in the biosynthesis of ADP-glucose, a building block required for the elongation reactions to produce glycogen. Catalyzes the reaction between ATP and alpha-D-glucose 1-phosphate (G1P) to produce pyrophosphate and ADP-Glc. This chain is Glucose-1-phosphate adenylyltransferase, found in Streptococcus agalactiae serotype Ia (strain ATCC 27591 / A909 / CDC SS700).